The following is a 234-amino-acid chain: 1-(5-phosphoribosyl)-5-[(5-phosphoribosylamino)methylideneamino] imidazole-4-carboxamide isomerase (234 aa).

The active-site Proton acceptor is the Asp-9. Asp-131 acts as the Proton donor in catalysis.

This sequence belongs to the HisA/HisF family.

Its subcellular location is the cytoplasm. It carries out the reaction 1-(5-phospho-beta-D-ribosyl)-5-[(5-phospho-beta-D-ribosylamino)methylideneamino]imidazole-4-carboxamide = 5-[(5-phospho-1-deoxy-D-ribulos-1-ylimino)methylamino]-1-(5-phospho-beta-D-ribosyl)imidazole-4-carboxamide. Its pathway is amino-acid biosynthesis; L-histidine biosynthesis; L-histidine from 5-phospho-alpha-D-ribose 1-diphosphate: step 4/9. This chain is 1-(5-phosphoribosyl)-5-[(5-phosphoribosylamino)methylideneamino] imidazole-4-carboxamide isomerase, found in Staphylococcus epidermidis (strain ATCC 35984 / DSM 28319 / BCRC 17069 / CCUG 31568 / BM 3577 / RP62A).